Reading from the N-terminus, the 500-residue chain is Glycogen synthase (500 aa).

Lysine 15 contributes to the ADP-alpha-D-glucose binding site.

This sequence belongs to the glycosyltransferase 1 family. Bacterial/plant glycogen synthase subfamily.

It catalyses the reaction [(1-&gt;4)-alpha-D-glucosyl](n) + ADP-alpha-D-glucose = [(1-&gt;4)-alpha-D-glucosyl](n+1) + ADP + H(+). It participates in glycan biosynthesis; glycogen biosynthesis. Functionally, synthesizes alpha-1,4-glucan chains using ADP-glucose. The protein is Glycogen synthase of Protochlamydia amoebophila (strain UWE25).